The chain runs to 141 residues: Hemoglobin subunit alpha (141 aa).

Residues Val1–Arg141 form the Globin domain. Ser3 is subject to Phosphoserine. Residue Lys7 is modified to N6-succinyllysine. Position 8 is a phosphothreonine (Thr8). Lys11 carries the N6-succinyllysine modification. The residue at position 16 (Lys16) is an N6-acetyllysine; alternate. N6-succinyllysine; alternate is present on Lys16. Residue Ser35 is modified to Phosphoserine. Lys40 carries the N6-succinyllysine modification. At Ser49 the chain carries Phosphoserine. His58 is an O2 binding site. His87 is a heme b binding site. A Phosphoserine modification is found at Ser102. Thr108 bears the Phosphothreonine mark. At Ser124 the chain carries Phosphoserine. Residue Thr134 is modified to Phosphothreonine. Ser138 carries the post-translational modification Phosphoserine.

The protein belongs to the globin family. Heterotetramer of two alpha chains and two beta chains. As to expression, red blood cells.

Involved in oxygen transport from the lung to the various peripheral tissues. In terms of biological role, hemopressin acts as an antagonist peptide of the cannabinoid receptor CNR1. Hemopressin-binding efficiently blocks cannabinoid receptor CNR1 and subsequent signaling. The polypeptide is Hemoglobin subunit alpha (HBA) (Dasypus novemcinctus (Nine-banded armadillo)).